The primary structure comprises 536 residues: Phosphoenolpyruvate carboxykinase (ATP) (536 aa).

3 residues coordinate substrate: Arg61, Tyr195, and Lys201. Residues Lys201, His220, and 236 to 244 (GLSGTGKTT) contribute to the ATP site. Lys201 and His220 together coordinate Mn(2+). A Mn(2+)-binding site is contributed by Asp257. ATP is bound by residues Glu285, Arg323, and Thr448. Arg323 is a binding site for substrate.

The protein belongs to the phosphoenolpyruvate carboxykinase (ATP) family. Requires Mn(2+) as cofactor.

It is found in the cytoplasm. The catalysed reaction is oxaloacetate + ATP = phosphoenolpyruvate + ADP + CO2. Its pathway is carbohydrate biosynthesis; gluconeogenesis. Functionally, involved in the gluconeogenesis. Catalyzes the conversion of oxaloacetate (OAA) to phosphoenolpyruvate (PEP) through direct phosphoryl transfer between the nucleoside triphosphate and OAA. This chain is Phosphoenolpyruvate carboxykinase (ATP), found in Methylobacterium sp. (strain 4-46).